A 391-amino-acid polypeptide reads, in one-letter code: Thioredoxin-interacting protein (391 aa).

Lys-212 is covalently cross-linked (Glycyl lysine isopeptide (Lys-Gly) (interchain with G-Cter in ubiquitin)). The residue at position 361 (Ser-361) is a Phosphoserine.

Belongs to the arrestin family. As to quaternary structure, homodimer; disulfide-linked. Interacts with TXN/thioredoxin through its redox-active site. Interacts with transcriptional repressors ZBTB16, ZBTB32 and HDAC1. Interacts with DDIT4. In terms of processing, ubiquitinated; undergoes heterotypic 'Lys-48'-/'Lys-63'-branched polyubiquitination catalyzed by ITCH and UBR5 resulting in proteasomal degradation. Deubiquitinated by USP5, leading to TXNIP stabilization.

It localises to the cytoplasm. It is found in the nucleus. In terms of biological role, may act as an oxidative stress mediator by inhibiting thioredoxin activity or by limiting its bioavailability. Interacts with COPS5 and restores COPS5-induced suppression of CDKN1B stability, blocking the COPS5-mediated translocation of CDKN1B from the nucleus to the cytoplasm. Functions as a transcriptional repressor, possibly by acting as a bridge molecule between transcription factors and corepressor complexes, and over-expression will induce G0/G1 cell cycle arrest. Required for the maturation of natural killer cells. Acts as a suppressor of tumor cell growth. Inhibits the proteasomal degradation of DDIT4, and thereby contributes to the inhibition of the mammalian target of rapamycin complex 1 (mTORC1). The chain is Thioredoxin-interacting protein (TXNIP) from Homo sapiens (Human).